The sequence spans 206 residues: MAGAVDTSKGLPSHPERATLEGKNKFLGFWFFLGGETILFATFFGTFLGLRGGTADGPTSADLVALDLVFIMTMLLLTSSLTSVLAMFAMKKNNFKAMMIWMWITVVLGLAFLGFEIYEFHHYVVDYQFGFSTSAFASAFYSLVGLHGAHVAFGLSWIIVLLIRYRKSGITLTNAPKFYVAGLYWHFIDVVWVFIFTVVYLMGVGG.

5 helical membrane-spanning segments follow: residues 26–46 (FLGF…FFGT), 68–88 (LVFI…LAMF), 97–117 (AMMI…GFEI), 143–163 (LVGL…VLLI), and 185–205 (WHFI…MGVG).

The protein belongs to the cytochrome c oxidase subunit 3 family.

Its subcellular location is the cell membrane. The catalysed reaction is 4 Fe(II)-[cytochrome c] + O2 + 8 H(+)(in) = 4 Fe(III)-[cytochrome c] + 2 H2O + 4 H(+)(out). This Alkalihalophilus pseudofirmus (strain ATCC BAA-2126 / JCM 17055 / OF4) (Bacillus pseudofirmus) protein is Cytochrome c oxidase subunit 3 (ctaE).